A 314-amino-acid polypeptide reads, in one-letter code: Protein YIF1B (314 aa).

M1 carries the post-translational modification N-acetylmethionine. Low complexity predominate over residues M1–G12. The interval M1–A55 is disordered. Residues M1–D156 are Cytoplasmic-facing. T13 is modified (phosphothreonine). The span at R15–I25 shows a compositional bias: basic residues. The residue at position 65 (S65) is a Phosphoserine. The helical transmembrane segment at L157–T177 threads the bilayer. The Extracellular segment spans residues Q178–S192. Residues A193–V213 traverse the membrane as a helical segment. Over N214–T219 the chain is Cytoplasmic. A helical membrane pass occupies residues I220–G240. A topological domain (extracellular) is located at residue L241. A helical membrane pass occupies residues L242–F262. Over M263 to Y292 the chain is Cytoplasmic. The chain crosses the membrane as a helical span at residues L293–V313. Position 314 (R314) is a topological domain, extracellular.

It belongs to the YIF1 family. As to quaternary structure, interacts with HTR1A (via C-terminus). Interacts with ABCB9 (via TMD0); this interaction allows (but is not essential) the ER-to-Golgi trafficking and strongly depends on a salt bridge within TMD0.

It is found in the endoplasmic reticulum membrane. It localises to the golgi apparatus membrane. Its subcellular location is the endoplasmic reticulum-Golgi intermediate compartment membrane. Functions in endoplasmic reticulum to Golgi vesicle-mediated transport and regulates the proper organization of the endoplasmic reticulum and the Golgi. Plays a key role in targeting to neuronal dendrites receptors such as HTR1A. Plays also a role in primary cilium and sperm flagellum assembly probably through protein transport to these compartments. This chain is Protein YIF1B, found in Homo sapiens (Human).